The following is a 360-amino-acid chain: MPGTVATLRFQLLPPEPDDAFWGAPCEQPLERRYQALPALVCIMCCLFGVVYCFFGYRCFKAVLFLTGLLFGSVVIFLLCYRERVLETQLSAGASAGIALGIGLLCGLVAMLVRSVGLFLVGLLLGLLLAAAALLGSAPYYQPGSVWGPLGLLLGGGLLCALLTLRWPRPLTTLATAVTGAALIATAADYFAELLLLGRYVVERLRAAPVPPLCWRSWALLALWPLLSLMGVLVQWRVTAEGDSHTEVVISRQRRRVQLMRIRQQEDRKEKRRKKRPPRAPLRGPRAPPRPGPPDPAYRRRPVPIKRFNGDVLSPSYIQSFRDRQTGSSLSSFMASPTDADYEYGSRGPLTACSGPPVRV.

The next 7 helical transmembrane spans lie at 36–56 (ALPA…CFFG), 59–79 (CFKA…IFLL), 93–113 (GASA…AMLV), 116–136 (VGLF…ALLG), 145–165 (SVWG…LLTL), 177–197 (AVTG…LLLL), and 218–238 (WALL…QWRV). Disordered stretches follow at residues 260 to 304 (MRIR…RPVP) and 324 to 360 (RQTG…PVRV). The segment covering 286 to 296 (RAPPRPGPPDP) has biased composition (pro residues). Residues 326-335 (TGSSLSSFMA) show a composition bias toward polar residues.

Belongs to the TMEM198 family. In terms of assembly, interacts with LRP6.

The protein localises to the membrane. It localises to the cell membrane. The protein resides in the cytoplasmic vesicle. Its function is as follows. Promotes LRP6 phosphorylation by casein kinases and thereby plays a role in Wnt signaling. May be a membrane scaffold protein involved in the self-aggregation of LRP6 to further enhance its activity. The sequence is that of Transmembrane protein 198 (TMEM198) from Homo sapiens (Human).